The following is a 278-amino-acid chain: Shikimate dehydrogenase (NADP(+)) (278 aa).

Shikimate is bound by residues 18–20 and Thr65; that span reads SRS. Residue Lys69 is the Proton acceptor of the active site. NADP(+) is bound at residue Glu80. Residues Asn89 and Asp104 each contribute to the shikimate site. Residues 129–133 and Leu218 each bind NADP(+); that span reads GAGGS. Position 220 (Tyr220) interacts with shikimate. Gly241 is an NADP(+) binding site.

This sequence belongs to the shikimate dehydrogenase family. In terms of assembly, homodimer.

It catalyses the reaction shikimate + NADP(+) = 3-dehydroshikimate + NADPH + H(+). The protein operates within metabolic intermediate biosynthesis; chorismate biosynthesis; chorismate from D-erythrose 4-phosphate and phosphoenolpyruvate: step 4/7. In terms of biological role, involved in the biosynthesis of the chorismate, which leads to the biosynthesis of aromatic amino acids. Catalyzes the reversible NADPH linked reduction of 3-dehydroshikimate (DHSA) to yield shikimate (SA). This Rhodopseudomonas palustris (strain ATCC BAA-98 / CGA009) protein is Shikimate dehydrogenase (NADP(+)).